The sequence spans 213 residues: Orotate phosphoribosyltransferase (213 aa).

Lys-26 is a binding site for 5-phospho-alpha-D-ribose 1-diphosphate. 34–35 (FF) lines the orotate pocket. 5-phospho-alpha-D-ribose 1-diphosphate-binding positions include 72 to 73 (YK), Arg-99, Lys-100, Lys-103, His-105, and 124 to 132 (DDVITAGTA). Positions 128 and 156 each coordinate orotate.

It belongs to the purine/pyrimidine phosphoribosyltransferase family. PyrE subfamily. In terms of assembly, homodimer. It depends on Mg(2+) as a cofactor.

It catalyses the reaction orotidine 5'-phosphate + diphosphate = orotate + 5-phospho-alpha-D-ribose 1-diphosphate. The protein operates within pyrimidine metabolism; UMP biosynthesis via de novo pathway; UMP from orotate: step 1/2. In terms of biological role, catalyzes the transfer of a ribosyl phosphate group from 5-phosphoribose 1-diphosphate to orotate, leading to the formation of orotidine monophosphate (OMP). The sequence is that of Orotate phosphoribosyltransferase from Salmonella agona (strain SL483).